The primary structure comprises 906 residues: Protein translocase subunit SecA (906 aa).

Residues Q87, 105–109 (GEGKT), and D512 contribute to the ATP site. Residues 839–896 (LEEQQRQQSEAAPRTYTHATAESQLADEEAAGEEGHTTFVRDEQKIGRNDPCPCGSGK) form a disordered region. Basic and acidic residues predominate over residues 871-886 (EEGHTTFVRDEQKIGR). Zn(2+)-binding residues include C890, C892, C901, and H902.

The protein belongs to the SecA family. In terms of assembly, monomer and homodimer. Part of the essential Sec protein translocation apparatus which comprises SecA, SecYEG and auxiliary proteins SecDF-YajC and YidC. Requires Zn(2+) as cofactor.

The protein localises to the cell inner membrane. The protein resides in the cytoplasm. The catalysed reaction is ATP + H2O + cellular proteinSide 1 = ADP + phosphate + cellular proteinSide 2.. Part of the Sec protein translocase complex. Interacts with the SecYEG preprotein conducting channel. Has a central role in coupling the hydrolysis of ATP to the transfer of proteins into and across the cell membrane, serving both as a receptor for the preprotein-SecB complex and as an ATP-driven molecular motor driving the stepwise translocation of polypeptide chains across the membrane. This chain is Protein translocase subunit SecA, found in Aeromonas salmonicida (strain A449).